Here is a 65-residue protein sequence, read N- to C-terminus: MGMRMMFTVFLLVVLATTVVSFMSGRAFRDRNAAAKVSDLIALKARRPECCSHPACNVDHPEICR.

The N-terminal stretch at 1 to 21 is a signal peptide; it reads MGMRMMFTVFLLVVLATTVVS. Residues 22 to 46 constitute a propeptide that is removed on maturation; that stretch reads FMSGRAFRDRNAAAKVSDLIALKAR. E49 is modified (4-carboxyglutamate). Positions 52-54 are ser-Xaa-Pro motif, crucial for potent interaction with nAChR; that stretch reads SHP. 2 positions are modified to 4-hydroxyproline: P54 and P61. At E62 the chain carries 4-carboxyglutamate.

This sequence belongs to the conotoxin A superfamily. In terms of processing, contains 2 disulfide bonds. As to expression, expressed by the venom duct.

The protein resides in the secreted. Functionally, alpha-conotoxins act on postsynaptic membranes, they bind to the nicotinic acetylcholine receptors (nAChR) and thus inhibit them. In Conus amadis (Amadis cone), this protein is Alpha-conotoxine-like Am1.5.